The primary structure comprises 330 residues: MNIYYEQDADLAVLQNKNIAILGYGSQGHAHALNLKDSGMNVCVGLKTDSASCAKAREAGLKVDTVAEAVKWADIVMILLPDQTQKSVYDNEIAPNLKSGATLAFGHGFNIHYKQIVPPADVNVIMIAPKSPGHLVRRTYTEGNGVPCLIAVHQDATGDAKAIALAWAKGIGGTKAGVIETSFKDETETDLFGEQAVLCGGSAELIKAGFETLTEAGYPAELAYFECMHELKLIVDLYYEGGLSRMNYSVSDTAEYGGMTRGPRVVTSAAKAEMKKILEEIQDGRFAKEFIDECNSGYKKMNELRESNRNHPIEVVGAKLRGMMSWLKKK.

The 181-residue stretch at 1–181 (MNIYYEQDAD…GGTKAGVIET (181 aa)) folds into the KARI N-terminal Rossmann domain. NADP(+) is bound by residues 24–27 (YGSQ), Lys47, Ser50, Ser52, and 82–85 (DQTQ). His107 is an active-site residue. An NADP(+)-binding site is contributed by Gly133. One can recognise a KARI C-terminal knotted domain in the interval 182–327 (SFKDETETDL…AKLRGMMSWL (146 aa)). Mg(2+)-binding residues include Asp190, Glu194, Glu226, and Glu230. Ser251 is a substrate binding site.

This sequence belongs to the ketol-acid reductoisomerase family. It depends on Mg(2+) as a cofactor.

It catalyses the reaction (2R)-2,3-dihydroxy-3-methylbutanoate + NADP(+) = (2S)-2-acetolactate + NADPH + H(+). The enzyme catalyses (2R,3R)-2,3-dihydroxy-3-methylpentanoate + NADP(+) = (S)-2-ethyl-2-hydroxy-3-oxobutanoate + NADPH + H(+). It participates in amino-acid biosynthesis; L-isoleucine biosynthesis; L-isoleucine from 2-oxobutanoate: step 2/4. It functions in the pathway amino-acid biosynthesis; L-valine biosynthesis; L-valine from pyruvate: step 2/4. Involved in the biosynthesis of branched-chain amino acids (BCAA). Catalyzes an alkyl-migration followed by a ketol-acid reduction of (S)-2-acetolactate (S2AL) to yield (R)-2,3-dihydroxy-isovalerate. In the isomerase reaction, S2AL is rearranged via a Mg-dependent methyl migration to produce 3-hydroxy-3-methyl-2-ketobutyrate (HMKB). In the reductase reaction, this 2-ketoacid undergoes a metal-dependent reduction by NADPH to yield (R)-2,3-dihydroxy-isovalerate. The sequence is that of Ketol-acid reductoisomerase (NADP(+)) from Chlorobaculum tepidum (strain ATCC 49652 / DSM 12025 / NBRC 103806 / TLS) (Chlorobium tepidum).